The chain runs to 243 residues: MSMLCYTLIIVFLIGIWAAPKSEDNVPLGSPATSDLSDTSCAQTHEGLKTSRNTDQRHPAPKKAEDQELGSAANIIVDPKLFQKRRFQSPRVLFSTQPPPLSRDEQSVEFLDNEDTLNRNIRAKRETHPVHNLGEYSVCDSISVWVANKTEAMDIKGKPVTVMVDVNLNNHVFKQYFFETKCRNPNPVPSGCRGIDSGHWNSYCTTTQTFVRALTMEGNQASWRFIRIDTACVCVISRKTENF.

The N-terminal stretch at 1-18 is a signal peptide; the sequence is MSMLCYTLIIVFLIGIWA. The propeptide occupies 19–125; that stretch reads APKSEDNVPL…TLNRNIRAKR (107 aa). Over residues 47–66 the composition is skewed to basic and acidic residues; that stretch reads GLKTSRNTDQRHPAPKKAED. The tract at residues 47 to 69 is disordered; the sequence is GLKTSRNTDQRHPAPKKAEDQEL. Cystine bridges form between C139–C204, C182–C232, and C192–C234. N-linked (GlcNAc...) asparagine glycosylation is present at N148.

This sequence belongs to the NGF-beta family. As to quaternary structure, homodimer; non-covalently linked. As to expression, expressed by the venom gland.

Its subcellular location is the secreted. Functionally, nerve growth factor is important for the development and maintenance of the sympathetic and sensory nervous systems. It stimulates division and differentiation of sympathetic and embryonic sensory neurons as well as basal forebrain cholinergic neurons in the brain. Its relevance in the snake venom is not clear. However, it has been shown to inhibit metalloproteinase-dependent proteolysis of platelet glycoprotein Ib alpha, suggesting a metalloproteinase inhibition to prevent metalloprotease autodigestion and/or protection against prey proteases. Binds a lipid between the two protein chains in the homodimer. The lipid-bound form promotes histamine relase from mouse mast cells, contrary to the lipid-free form. In Oxyuranus scutellatus scutellatus (Australian taipan), this protein is Venom nerve growth factor.